A 152-amino-acid chain; its full sequence is Ribonuclease HI (152 aa).

An RNase H type-1 domain is found at 1 to 142; that stretch reads MDSKVVIYTD…ADKLAVQGRE (142 aa). Residues Asp10, Glu48, Asp70, and Asp134 each contribute to the Mg(2+) site.

Belongs to the RNase H family. In terms of assembly, monomer. It depends on Mg(2+) as a cofactor.

The protein localises to the cytoplasm. The catalysed reaction is Endonucleolytic cleavage to 5'-phosphomonoester.. Its function is as follows. Endonuclease that specifically degrades the RNA of RNA-DNA hybrids. In Rickettsia prowazekii (strain Madrid E), this protein is Ribonuclease HI (rnhA).